The primary structure comprises 421 residues: Testin (421 aa).

The PET domain occupies 92 to 199 (MILTNPVAAK…GDVKLPCEMD (108 aa)). The interval 133–164 (EKQPVAGSEGAQYRKKQLAKQLPAHDQDPSKC) is disordered. Residues 155–164 (PAHDQDPSKC) are compositionally biased toward basic and acidic residues. 3 consecutive LIM zinc-binding domains span residues 234-297 (YSCY…CDSE), 299-359 (PRCA…NHAV), and 362-421 (QGCH…KMMS).

It belongs to the prickle / espinas / testin family. In terms of assembly, interacts via LIM domain 1 with ZYX. Interacts (via LIM domain 3) with ENAH and VASP. Interacts with ALKBH4, talin, actin, alpha-actinin, GRIP1 and PXN. Interacts (via LIM domain 2) with ACTL7A (via N-terminus). Heterodimer with ACTL7A; the heterodimer interacts with ENAH to form a heterotrimer.

Its subcellular location is the cytoplasm. It is found in the cell junction. The protein resides in the focal adhesion. Functionally, scaffold protein that may play a role in cell adhesion, cell spreading and in the reorganization of the actin cytoskeleton. Plays a role in the regulation of cell proliferation. May act as a tumor suppressor. This Ateles geoffroyi (Black-handed spider monkey) protein is Testin (TES).